A 385-amino-acid chain; its full sequence is Mitochondrial protein C2orf69 (385 aa).

The N-terminal 24 residues, 1-24, are a transit peptide targeting the mitochondrion; it reads MWGFRLLRSPPLLLLLPQLGIGNA.

It belongs to the C2orf69 family.

Its subcellular location is the mitochondrion matrix. Its function is as follows. May play a role in the respiratory chain. This chain is Mitochondrial protein C2orf69 (C2orf69), found in Homo sapiens (Human).